We begin with the raw amino-acid sequence, 396 residues long: Acetate kinase (396 aa).

Position 8 (Asn8) interacts with Mg(2+). Lys15 contributes to the ATP binding site. Arg89 serves as a coordination point for substrate. Asp146 functions as the Proton donor/acceptor in the catalytic mechanism. ATP is bound by residues 206–210 (HLGNG), 280–282 (DMR), and 328–332 (GVGEN). Residue Glu382 participates in Mg(2+) binding.

This sequence belongs to the acetokinase family. As to quaternary structure, homodimer. Mg(2+) serves as cofactor. The cofactor is Mn(2+).

It is found in the cytoplasm. It carries out the reaction acetate + ATP = acetyl phosphate + ADP. Its pathway is metabolic intermediate biosynthesis; acetyl-CoA biosynthesis; acetyl-CoA from acetate: step 1/2. Catalyzes the formation of acetyl phosphate from acetate and ATP. Can also catalyze the reverse reaction. The sequence is that of Acetate kinase from Clavibacter michiganensis subsp. michiganensis (strain NCPPB 382).